Here is a 325-residue protein sequence, read N- to C-terminus: Probable isoaspartyl peptidase/L-asparaginase 2 (325 aa).

The active-site Nucleophile is threonine 195. Substrate is bound by residues 223–226 (RIGD) and 245–248 (TGEG).

The protein belongs to the Ntn-hydrolase family. In terms of assembly, heterotetramer of two alpha and two beta chains arranged as a dimer of alpha/beta heterodimers. Post-translationally, cleaved into an alpha and beta chain by autocatalysis; this activates the enzyme. The N-terminal residue of the beta subunit is responsible for the nucleophile hydrolase activity.

The catalysed reaction is Cleavage of a beta-linked Asp residue from the N-terminus of a polypeptide.. Functionally, acts in asparagine catabolism and also in the final steps of protein degradation via hydrolysis of a range of isoaspartyl dipeptides. In Arabidopsis thaliana (Mouse-ear cress), this protein is Probable isoaspartyl peptidase/L-asparaginase 2.